We begin with the raw amino-acid sequence, 225 residues long: UPF0758 protein Shewmr4_3597 (225 aa).

Residues 102–224 enclose the MPN domain; sequence VLTNPDLTRD…IVSFAERGWI (123 aa). His-173, His-175, and Asp-186 together coordinate Zn(2+). A JAMM motif motif is present at residues 173 to 186; the sequence is HNHPSGIAEPSQAD.

Belongs to the UPF0758 family.

This Shewanella sp. (strain MR-4) protein is UPF0758 protein Shewmr4_3597.